A 512-amino-acid polypeptide reads, in one-letter code: Cytochrome P450 monooxygenase poxM (512 aa).

The helical transmembrane segment at 15-35 threads the bilayer; it reads LLKGATIALSFFSLYLFGLVI. Cysteine 449 lines the heme pocket.

It belongs to the cytochrome P450 family. Requires heme as cofactor.

The protein localises to the membrane. It functions in the pathway secondary metabolite biosynthesis. Cytochrome P450 monooxygenase; part of the gene cluster that mediates the biosynthesis of oxaleimides, cytotoxic compounds containing an unusual disubstituted succinimide moiety. The first step of the pathway is provided by the HR-PKS poxF that serves in a new mode of collaborative biosynthesis with the PKS-NRPS poxE, by providing the olefin containing amino acid substrate via the synthesis of an ACP-bound dec-4-enoate. The cytochrome P450 monooxygenase poxM-catalyzed oxidation at the alpha-position creates the enzyme-bound 2-hydroxydec-4-enoyl-ACP thioester, which may be prone to spontaneous hydrolysis to yield 2-hydroxydec-4-enoic acid due to increased electrophilicity of the carbonyl. 2-hydroxydec-4-enoic acid can then be further oxidized by poxM to yield the alpha-ketoacid 2-oxodec-4-enoicacid, which is reductively aminated by the aminotransferase poxL to yield (S,E)-2-aminodec-4-enoic acid. The Hybrid PKS-NRPS synthetase poxE then performs condensation between the octaketide product of its PKS modules and the amino group of (S,E)-2-aminodec-4-enoic acid which is activated and incorporated by the adenylation domain. The resulting aminoacyl product can be cyclized by the Diels-Alderase PoxQ and reductively released by the reductive (R) domain of poxE to yield an aldehyde intermediate. The released aldehyde is then substrate for a Knoevenagel condensation by the hydrolyase poxO followed by an oxidation at the 5-position of the pyrrolidone ring. The presence of the olefin from the amino acid building block allows for migration of the substituted allyl group to occur. This allylic transposition reaction takes place in a conjugate addition, semipinacol-like fashion to yield a succinimide intermediate. Iterative two-electron oxidations of the C7 methyl of the succinimide intermediate to the carboxylic acid can be catalyzed by one of two remaining cytochrome P450 monooxygenasess poxC or poxD to yield oxaleimide A. Subsequent oxidation yields the maleimide scaffold oxaleimide I. Both oxaleimide A and oxaleimide I can undergo oxidative modifications in the decalin ring to yield the series of products oxaleimides B to H. The polypeptide is Cytochrome P450 monooxygenase poxM (Penicillium oxalicum (strain 114-2 / CGMCC 5302) (Penicillium decumbens)).